Consider the following 431-residue polypeptide: UDP-N-acetylmuramate--L-alanine ligase (431 aa).

108 to 114 provides a ligand contact to ATP; that stretch reads GAHGKST.

This sequence belongs to the MurCDEF family.

Its subcellular location is the cytoplasm. The enzyme catalyses UDP-N-acetyl-alpha-D-muramate + L-alanine + ATP = UDP-N-acetyl-alpha-D-muramoyl-L-alanine + ADP + phosphate + H(+). It functions in the pathway cell wall biogenesis; peptidoglycan biosynthesis. Cell wall formation. The sequence is that of UDP-N-acetylmuramate--L-alanine ligase from Campylobacter jejuni subsp. jejuni serotype O:23/36 (strain 81-176).